We begin with the raw amino-acid sequence, 177 residues long: Large ribosomal subunit protein uL6 (177 aa).

This sequence belongs to the universal ribosomal protein uL6 family. In terms of assembly, part of the 50S ribosomal subunit.

Its function is as follows. This protein binds to the 23S rRNA, and is important in its secondary structure. It is located near the subunit interface in the base of the L7/L12 stalk, and near the tRNA binding site of the peptidyltransferase center. This chain is Large ribosomal subunit protein uL6, found in Rhizobium leguminosarum bv. trifolii (strain WSM2304).